The primary structure comprises 69 residues: Pleurain-A4 (69 aa).

The first 22 residues, 1 to 22 (MFTLKKTLLLLFFLGTISISLC), serve as a signal peptide directing secretion. Residues 23–43 (KQERDADEDDGRKMTEEEVKR) constitute a propeptide that is removed on maturation. Residues C63 and C69 are joined by a disulfide bond.

Belongs to the frog skin active peptide (FSAP) family. Pleurain subfamily. As to expression, expressed by the skin glands.

The protein localises to the secreted. Its function is as follows. Antimicrobial peptide. Has activity against Gram-positive and -negative bacteria, and fungi. Has little hemolytic activity on red blood cells. The chain is Pleurain-A4 from Nidirana pleuraden (Yunnan pond frog).